Consider the following 143-residue polypeptide: Large ribosomal subunit protein uL11 (143 aa).

Belongs to the universal ribosomal protein uL11 family. As to quaternary structure, part of the ribosomal stalk of the 50S ribosomal subunit. Interacts with L10 and the large rRNA to form the base of the stalk. L10 forms an elongated spine to which L12 dimers bind in a sequential fashion forming a multimeric L10(L12)X complex. Post-translationally, one or more lysine residues are methylated.

In terms of biological role, forms part of the ribosomal stalk which helps the ribosome interact with GTP-bound translation factors. This is Large ribosomal subunit protein uL11 from Koribacter versatilis (strain Ellin345).